The following is a 304-amino-acid chain: Protease HtpX homolog 1 (304 aa).

A run of 2 helical transmembrane segments spans residues Val-17–Leu-37 and Ser-39–Asp-59. A Zn(2+)-binding site is contributed by His-140. The active site involves Glu-141. A Zn(2+)-binding site is contributed by His-144. 2 consecutive transmembrane segments (helical) span residues Ala-151–Phe-171 and Ala-186–Ile-206. Glu-214 provides a ligand contact to Zn(2+).

The protein belongs to the peptidase M48B family. It depends on Zn(2+) as a cofactor.

It is found in the cell membrane. In Streptomyces coelicolor (strain ATCC BAA-471 / A3(2) / M145), this protein is Protease HtpX homolog 1.